We begin with the raw amino-acid sequence, 137 residues long: uncharacterized protein (137 aa).

A disordered region spans residues Lys67–Ser87. The span at Arg70–Arg85 shows a compositional bias: basic and acidic residues.

This is an uncharacterized protein from Human cytomegalovirus (strain AD169) (HHV-5).